We begin with the raw amino-acid sequence, 20 residues long: Cicerin (20 aa).

The tract at residues 1 to 20 is disordered; the sequence is ARCENFADSYRQPPISSSQT.

In terms of biological role, has antifungal activity against B.cinerea, F.oxysporum and M.arachidicola. Inhibits cell-free translation in rabbit reticulocyte lysate system. In Cicer arietinum (Chickpea), this protein is Cicerin.